The primary structure comprises 1085 residues: MGNTTTKFRKALINGDENLACQIYENNPQLKESLDPNISYGEPYQHNTPLHYAARHGMNRILGTFLFGRDGNPNKRNVHNETSMHLLCMGPQIMISEGTLHPRLARPVEDDFRRADCLQMILQWKGAKLDQGEYERAAIDAVDNKKNTPLHYAAASGMKACVELLVKHGGDLFAENENRDTPCDCAEKQQHKDLALSLESQMVFSRDPEAEEIEAEYAALDKREPYEGLRPQDLRRLKDMLIVETADMLQAPLFTAEALLRAHDWDREKLLEAWMSNPENCCQRSGVQMPTPPPSGYNAWDTLPSPRTPRTTRSSVTSPDEISLSPGDLDTSLCDICMCSISVFEDPVDMPCGHDFCRGCWEAFLNLKIQEGEAHNIFCPAYECFQLVPVDVIESVVSKEMDKRYLQFDIKAFVENNPAIKWCPTAGCERAVRLTKQGSNPSGSDTLSFPLLRAPAVDCGKGHLFCWECLGEAHEPCDCQTWKNWLQKITEMKPEELVGVSEAYEDAANCLWLLTNSKPCANCKSPIQKNEGCNHMQCAKCKYDFCWICLEEWKKHSSSTGGYYRCTRYEVIQHVEEQSKEMTVEAEKKHKRFQELDRFMHYYTRYKNHEHSYQLEQRLLKTAKEKMEQLSRALKETEGGCPDTTFIEDAVHVLLKTRRILKCSYPYGFFLEPKSTKKEIFELMQTDLEMVTEDLAQKVNRPYLRTPRHKIIRAACLVQQKRQEFLASVARGVAPADSPDAPRRSFAGGTWDWEYLGFASPEYRRRHRQQRRRGDVHSLLSNPTDLDEPSESTFDLPEGSSGRRPGASVVSSASMSVLHSSSLRDYSPASRSANQDSLQALSSLDEDDPNILLAIQLSLQESGLDMDEETRDFLSNETSLGAIGSSLPSRLDSVPRSTESPRAALSSSELLELGDSLMRLGADSDPFSTDTLSSRPLSETRSDFCPSSSDLDSAGQDPSANDNLLGNIMAWFHDMNPQSIALIPPAATTEISAEPQLPCIRDGSEGVRDMELVPPEDSVSKDTGVHEGERAQMEENPLEENILAREELSQAGDSSNEAVGRGDRPDAASQTPQTSSDWLEQVHSV.

Gly-2 is lipidated: N-myristoyl glycine. ANK repeat units follow at residues Gln-45–Lys-75 and Lys-145–Ala-174. The interval Cys-282–Ile-322 is disordered. The segment covering Pro-304 to Pro-319 has biased composition (low complexity). Residues Asp-330 to Glu-570 form a TRIAD supradomain region. Cys-334, Cys-337, Cys-352, His-354, Cys-357, Cys-360, Cys-379, Cys-384, Cys-466, Cys-469, His-474, Cys-479, Cys-520, and Cys-523 together coordinate Zn(2+). The RING-type 1 zinc-finger motif lies at Cys-334–Cys-384. The IBR-type zinc-finger motif lies at Asp-402–Cys-479. An RING-type 2; atypical zinc finger spans residues Cys-520–Cys-549. Cys-533 is an active-site residue. Residues Cys-538, Cys-541, Cys-546, Cys-549, His-556, and Cys-566 each contribute to the Zn(2+) site. Positions Glu-576–Cys-641 form a coiled coil. Ser-738 carries the post-translational modification Phosphoserine. The interval Arg-764–Ser-808 is disordered. A UIM domain is found at Glu-846–Asp-865. Ser-879 and Ser-906 each carry phosphoserine. 3 disordered regions span residues Gly-884 to Ser-907, Gly-921 to Ser-959, and Pro-1014 to Val-1085. The segment covering Pro-926–Ser-959 has biased composition (polar residues). Residues Ser-1018 to Met-1033 are compositionally biased toward basic and acidic residues. Over residues Ala-1068 to Val-1085 the composition is skewed to polar residues.

The protein belongs to the RBR family.

The catalysed reaction is [E2 ubiquitin-conjugating enzyme]-S-ubiquitinyl-L-cysteine + [acceptor protein]-L-lysine = [E2 ubiquitin-conjugating enzyme]-L-cysteine + [acceptor protein]-N(6)-ubiquitinyl-L-lysine.. Functionally, might act as an E3 ubiquitin-protein ligase, or as part of E3 complex, which accepts ubiquitin from specific E2 ubiquitin-conjugating enzymes and then transfers it to substrates. This is Ankyrin repeat and IBR domain-containing protein 1 (Ankib1) from Mus musculus (Mouse).